We begin with the raw amino-acid sequence, 358 residues long: Protein RecA (358 aa).

Residue Gly-69–Thr-76 participates in ATP binding.

The protein belongs to the RecA family.

It localises to the cytoplasm. Functionally, can catalyze the hydrolysis of ATP in the presence of single-stranded DNA, the ATP-dependent uptake of single-stranded DNA by duplex DNA, and the ATP-dependent hybridization of homologous single-stranded DNAs. It interacts with LexA causing its activation and leading to its autocatalytic cleavage. This Trichormus variabilis (strain ATCC 29413 / PCC 7937) (Anabaena variabilis) protein is Protein RecA.